Here is a 218-residue protein sequence, read N- to C-terminus: Uracil-DNA glycosylase (218 aa).

Catalysis depends on Asp59, which acts as the Proton acceptor.

Belongs to the uracil-DNA glycosylase (UDG) superfamily. UNG family.

It localises to the cytoplasm. The enzyme catalyses Hydrolyzes single-stranded DNA or mismatched double-stranded DNA and polynucleotides, releasing free uracil.. Its function is as follows. Excises uracil residues from the DNA which can arise as a result of misincorporation of dUMP residues by DNA polymerase or due to deamination of cytosine. In Staphylococcus aureus (strain bovine RF122 / ET3-1), this protein is Uracil-DNA glycosylase.